We begin with the raw amino-acid sequence, 696 residues long: Iron-sulfur clusters transporter ATM1, mitochondrial (696 aa).

The N-terminal 67 residues, 1-67 (MIKWGLFGAV…RFFSSSHKLG (67 aa)), are a transit peptide targeting the mitochondrion. Residues 68-109 (VNTKEDSSTYLFGRKISTSESKMLKSLLVTIWPKNKPSFKLR) lie on the Mitochondrial matrix side of the membrane. Residues 110-131 (VIFALSLLIASKLLNVEVPFFF) traverse the membrane as a helical segment. The ABC transmembrane type-1 domain maps to 110 to 400 (VIFALSLLIA…LGSVYRELKQ (291 aa)). Residues 132-154 (KKIIDEMNVDWNDQLGTVGTVIG) lie on the Mitochondrial intermembrane side of the membrane. A helical transmembrane segment spans residues 155 to 178 (TLIIAYGGARFGAVLFGELRNAVF). Over 179 to 227 (ASVAQTAIKRVAHNTFVHLLNMDLNFHLSRQTGGLTRAIDRGTKGISYV) the chain is Mitochondrial matrix. Residues 228-251 (LNAMVFHIIPISFEISMVCGILIY) traverse the membrane as a helical segment. Asn252 is a topological domain (mitochondrial intermembrane). The chain crosses the membrane as a helical span at residues 253 to 273 (YGLSFAAVTLATMLSYSVFTI). Residues 274-339 (KTTAWRTGFR…ASVKVATSLA (66 aa)) are Mitochondrial matrix-facing. Residues 279–283 (RTGFR) and 342–345 (NAGQ) each bind glutathione. The chain crosses the membrane as a helical span at residues 340 to 358 (YLNAGQNFIFTSALTAMMY). At 359–373 (MGCNGVATGSLTVGD) the chain is on the mitochondrial intermembrane side. A helical membrane pass occupies residues 374-395 (LVLINQLVFQLSVPLSFLGSVY). Position 392 (Gly392) interacts with glutathione. Over 396–696 (RELKQSLLDM…EYAKETEEQK (301 aa)) the chain is Mitochondrial matrix. The ABC transporter domain occupies 438–674 (IKFENVTFGY…PNSLYSQLWN (237 aa)). Residues Tyr447 and 471–482 (GPSGSGKSTILR) each bind ATP.

Belongs to the ABC transporter superfamily. ABCB family. Heavy Metal importer (TC 3.A.1.210) subfamily. In terms of assembly, homodimer.

The protein localises to the mitochondrion inner membrane. In terms of biological role, performs an essential function in the generation of cytoplasmic iron-sulfur proteins by mediating the ATP-dependent export of Fe/S cluster precursors synthesized by NFS1 and other mitochondrial proteins. Hydrolyzes ATP. Binds glutathione and may function by transporting a glutathione-conjugated iron-sulfur compound. The chain is Iron-sulfur clusters transporter ATM1, mitochondrial from Debaryomyces hansenii (strain ATCC 36239 / CBS 767 / BCRC 21394 / JCM 1990 / NBRC 0083 / IGC 2968) (Yeast).